The chain runs to 43 residues: Defensin (43 aa).

Intrachain disulfides connect C3–C34, C20–C39, and C24–C41.

The protein localises to the secreted. Antibacterial peptide. Affects Gram-negative bacteria including methicillin-resistant Staphylococcus aureus. The polypeptide is Defensin (Trypoxylus dichotomus (Japanese rhinoceros beetle)).